The chain runs to 135 residues: Interleukin-5 (135 aa).

The first 19 residues, 1-19 (MRVLLQLGLLALGAVCVCA), serve as a signal peptide directing secretion. N-linked (GlcNAc...) asparagine glycans are attached at residues N48, N77, and N91.

Belongs to the IL-5 family. As to quaternary structure, homodimer; disulfide-linked. Interacts with IL5RA. Interacts with CSF2RB.

The protein localises to the secreted. Homodimeric cytokine expressed predominantly by T-lymphocytes and NK cells that plays an important role in the survival, differentiation, and chemotaxis of eosinophils. Also acts on activated and resting B-cells to induce immunoglobulin production, growth, and differentiation. Mechanistically, exerts its biological effects through a receptor composed of IL5RA subunit and the cytokine receptor common subunit beta/CSF2RB. Binding to the receptor leads to activation of various kinases including LYN, SYK and JAK2 and thereby propagates signals through the RAS-MAPK and JAK-STAT5 pathways respectively. The sequence is that of Interleukin-5 (IL5) from Cavia porcellus (Guinea pig).